The sequence spans 204 residues: Probable GTP-binding protein EngB (204 aa).

Residues 1–21 are disordered; that stretch reads MKVSSAEFVTSGTRPAHYPPP. An EngB-type G domain is found at 22 to 194; it reads ELPEVAFAGR…WARIEVMLAA (173 aa). GTP is bound by residues 30 to 37, 57 to 61, 75 to 78, 142 to 145, and 173 to 175; these read GRSNVGKS, GRTQL, DLPG, TKCD, and FSA. Mg(2+) is bound by residues S37 and T59.

Belongs to the TRAFAC class TrmE-Era-EngA-EngB-Septin-like GTPase superfamily. EngB GTPase family. Mg(2+) is required as a cofactor.

In terms of biological role, necessary for normal cell division and for the maintenance of normal septation. This Geobacter metallireducens (strain ATCC 53774 / DSM 7210 / GS-15) protein is Probable GTP-binding protein EngB.